We begin with the raw amino-acid sequence, 542 residues long: Membrane protein insertase YidC (542 aa).

The next 5 membrane-spanning stretches (helical) occupy residues L7–F27, F338–V358, M417–F437, L455–L475, and F494–W514.

Belongs to the OXA1/ALB3/YidC family. Type 1 subfamily. As to quaternary structure, interacts with the Sec translocase complex via SecD. Specifically interacts with transmembrane segments of nascent integral membrane proteins during membrane integration.

Its subcellular location is the cell inner membrane. In terms of biological role, required for the insertion and/or proper folding and/or complex formation of integral membrane proteins into the membrane. Involved in integration of membrane proteins that insert both dependently and independently of the Sec translocase complex, as well as at least some lipoproteins. Aids folding of multispanning membrane proteins. The sequence is that of Membrane protein insertase YidC from Actinobacillus pleuropneumoniae serotype 7 (strain AP76).